A 272-amino-acid chain; its full sequence is Shikimate dehydrogenase (NADP(+)) (272 aa).

Shikimate-binding positions include 14-16 and threonine 61; that span reads SKS. Residue lysine 65 is the Proton acceptor of the active site. Position 77 (glutamate 77) interacts with NADP(+). Positions 86 and 102 each coordinate shikimate. NADP(+)-binding positions include 126–130, 149–154, and methionine 213; these read GAGGA and NRTASR. Tyrosine 215 lines the shikimate pocket. Glycine 237 contacts NADP(+).

This sequence belongs to the shikimate dehydrogenase family. Homodimer.

The enzyme catalyses shikimate + NADP(+) = 3-dehydroshikimate + NADPH + H(+). It participates in metabolic intermediate biosynthesis; chorismate biosynthesis; chorismate from D-erythrose 4-phosphate and phosphoenolpyruvate: step 4/7. Functionally, involved in the biosynthesis of the chorismate, which leads to the biosynthesis of aromatic amino acids. Catalyzes the reversible NADPH linked reduction of 3-dehydroshikimate (DHSA) to yield shikimate (SA). The sequence is that of Shikimate dehydrogenase (NADP(+)) from Citrobacter koseri (strain ATCC BAA-895 / CDC 4225-83 / SGSC4696).